The primary structure comprises 475 residues: BTB/POZ domain-containing protein 10 (475 aa).

The interval 1-144 (MAGRPHPYDS…SQSSSDGSCK (144 aa)) is disordered. The span at 22-31 (LHSRPRKLYK) shows a compositional bias: basic residues. The span at 57–80 (GHERSRDRRRSSDRSRDSSHERAE) shows a compositional bias: basic and acidic residues. Residues 81 to 94 (SQLTPCIRNVTSPT) are compositionally biased toward polar residues. A compositionally biased stretch (basic and acidic residues) spans 97 to 107 (HHIEREKDHSS). Low complexity predominate over residues 108–144 (SRPSSPRPQRASPNGSMSSAGNSSRNSSQSSSDGSCK). An interaction with AKT family members region spans residues 146–475 (SGEMVFVYEN…LDPDAQNPML (330 aa)). The BTB domain maps to 167 to 241 (ERVTLIVDNT…YKTGIIRCPD (75 aa)). The tract at residues 451–475 (ELDILPSHPASGNNDLDPDAQNPML) is disordered.

In terms of assembly, interacts (via C-terminal 330-amino-acid region) with AKT1; AKT2 and AKT3. Interacts with PPP2CA and PPP1CA. As to expression, ubiquitously expressed (at protein level).

Its subcellular location is the nucleus. It is found in the cytoplasm. Plays a major role as an activator of AKT family members by inhibiting PPP2CA-mediated dephosphorylation, thereby keeping AKTs activated. Plays a role in preventing motor neuronal death and in accelerating the growth of pancreatic beta cells. The sequence is that of BTB/POZ domain-containing protein 10 (Btbd10) from Mus musculus (Mouse).